We begin with the raw amino-acid sequence, 213 residues long: UPF0502 protein Daro_2469 (213 aa).

The protein belongs to the UPF0502 family.

This is UPF0502 protein Daro_2469 from Dechloromonas aromatica (strain RCB).